The chain runs to 142 residues: Lipoprotein MlpI (142 aa).

An N-terminal signal peptide occupies residues 1-17 (MKIINILFCLFLLMLNS). A lipid anchor (N-palmitoyl cysteine) is attached at Cys-18. Cys-18 is lipidated: S-diacylglycerol cysteine. Residues 22–54 (DTNTSQTKSRQKRDLTQKEATQEKPKSKEDLLR) are disordered. The segment covering 33 to 54 (KRDLTQKEATQEKPKSKEDLLR) has biased composition (basic and acidic residues).

The protein belongs to the Multicopy lipoprotein (Mlp) family.

It localises to the cell outer membrane. Functionally, an outer membrane protein that may participate in pathogenesis. Some human Lyme disease patients have antibodies against this protein. The Mlp proteins probably undergo intragenic recombination, generating new alleles. This Borreliella burgdorferi (strain ATCC 35210 / DSM 4680 / CIP 102532 / B31) (Borrelia burgdorferi) protein is Lipoprotein MlpI.